We begin with the raw amino-acid sequence, 1651 residues long: Vitellogenin-6 (1651 aa).

The N-terminal stretch at 1-15 (MKFFIALALLGAALA) is a signal peptide. A Vitellogenin domain is found at 34 to 716 (FRAGREYRYL…TTESVLPTEM (683 aa)). N-linked (GlcNAc...) asparagine glycosylation is found at asparagine 252 and asparagine 1288. Residues 1340–1515 (ANCVVKSTKI…SYLYKDSKCN (176 aa)) enclose the VWFD domain. 2 disulfide bridges follow: cysteine 1342-cysteine 1479 and cysteine 1364-cysteine 1514. Residues 1527-1556 (FQRIEKNQEEEKDQEMNYEESRREQDDEPT) form a disordered region.

As to expression, synthesized in Caenorhabditis only by 32 cells building the intestine of adult hermaphroditic individuals; they are cotranslationally secreted into the body cavity and subsequently taken up by the gonad.

Its subcellular location is the secreted. Precursor of the egg-yolk proteins that are sources of nutrients during embryonic development. May play a role in cholesterol uptake. May be involved in thermotolerance. This is Vitellogenin-6 (vit-6) from Caenorhabditis elegans.